The following is a 1032-amino-acid chain: Beta-galactosidase (1032 aa).

Substrate contacts are provided by Asn100 and Asp198. Residue Asp198 coordinates Na(+). Residues Glu413, His415, and Glu458 each contribute to the Mg(2+) site. Substrate contacts are provided by residues Glu458 and 534–537 (EYAH). The Proton donor role is filled by Glu458. Glu534 serves as the catalytic Nucleophile. Residue Asn594 coordinates Mg(2+). Residues Phe598 and Asn601 each contribute to the Na(+) site. Asn601 and Trp1006 together coordinate substrate.

Belongs to the glycosyl hydrolase 2 family. In terms of assembly, homotetramer. Mg(2+) serves as cofactor. It depends on Na(+) as a cofactor.

It catalyses the reaction Hydrolysis of terminal non-reducing beta-D-galactose residues in beta-D-galactosides.. In Vibrio vulnificus (strain CMCP6), this protein is Beta-galactosidase.